The primary structure comprises 113 residues: MKLLTTICRLKLEKMYSKTNTSSTIFEKARHGTEKISTARSEGHHITFSRWKACTAIGGRCKNLCDDSEFRISYCSRPTTRCCVTECDPTDPNNWIPKDSVGTQEWYPKDSRH.

3 disulfides stabilise this stretch: Cys54–Cys82, Cys61–Cys75, and Cys65–Cys83.

The protein belongs to the beta-defensin family.

It is found in the secreted. Has antibacterial activity. The polypeptide is Beta-defensin 112 (DEFB112) (Pan troglodytes (Chimpanzee)).